The chain runs to 127 residues: Ribosome-binding factor A (127 aa).

The protein belongs to the RbfA family. As to quaternary structure, monomer. Binds 30S ribosomal subunits, but not 50S ribosomal subunits or 70S ribosomes.

The protein resides in the cytoplasm. In terms of biological role, one of several proteins that assist in the late maturation steps of the functional core of the 30S ribosomal subunit. Associates with free 30S ribosomal subunits (but not with 30S subunits that are part of 70S ribosomes or polysomes). Required for efficient processing of 16S rRNA. May interact with the 5'-terminal helix region of 16S rRNA. This is Ribosome-binding factor A from Geobacillus kaustophilus (strain HTA426).